The sequence spans 800 residues: MRKKRYVWLKSILVAILVFGSGVWINTSNGTNAQAATITQDTPINQIFTDAALAEKMKTVLGKTNVTDTVSQTDLDQVTTLQADRLGIKSIDGLEYLNNLTQINFSNNQLTDITPLKDLTKLVDILMNNNQIADITPLANLTNLTGLTLFNNQITDIDPLKNLTNLNRLELSSNTISDISALSGLTNLQQLSFGNQVTDLKPLANLTTLERLDISSNKVSDISVLAKLTNLESLIATNNQISDITPLGILTNLDELSLNGNQLKDIGTLASLTNLTDLDLANNQISNLAPLSGLTKLTELKLGANQISNISPLAGLTALTNLELNENQLEDISPISNLKNLTYLTLYFNNISDISPVSSLTKLQRLFFYNNKVSDVSSLANLTNINWLSAGHNQISDLTPLANLTRITQLGLNDQAWTNAPVNYKANVSIPNTVKNVTGALIAPATISDGGSYAEPDITWNLPSYTNEVSYTFSQPVTIGKGTTTFSGTVTQPLKAIFNAKFHVDGKETTKEVEAGNLLTEPAKPVKEGHTFVGWFDAQTGGTKWNFSTDKMPTNDINLYAQFSINSYTATFENDGVTTSQTVDYQGLLQEPTPPTKEGYTFKGWYDAKTGGDKWDFATSKMPAKNITLYAQYSANSYTATFDVDGKSTTQAVDYQGLLKEPKAPTKAGYTFKGWYDEKTDGKKWDFATDKMPANDITLYAQFTKNPVAPPTTGGNTPPTTNNGGNTTPPSANIPGSDTSNTSTGNSASTTSTMNAYDPYNSKEASLPTTGDSDNALYLLLGLLAVGTAMALTKKARASK.

Residues 1–35 (MRKKRYVWLKSILVAILVFGSGVWINTSNGTNAQA) form the signal peptide. The LRRNT domain occupies 36–76 (ATITQDTPINQIFTDAALAEKMKTVLGKTNVTDTVSQTDLD). LRR repeat units lie at residues 77 to 98 (QVTT…EYLN), 99 to 120 (NLTQ…KDLT), 121 to 142 (KLVD…ANLT), 143 to 164 (NLTG…KNLT), 165 to 186 (NLNR…SGLT), 187 to 207 (NLQQ…ANLT), 208 to 229 (TLER…AKLT), 230 to 251 (NLES…GILT), 252 to 273 (NLDE…ASLT), 274 to 295 (NLTD…SGLT), 296 to 317 (KLTE…AGLT), 318 to 339 (ALTN…SNLK), 340 to 361 (NLTY…SSLT), 362 to 383 (KLQR…ANLT), and 384 to 405 (NINW…ANLT). Residues 416-505 (AWTNAPVNYK…AIFNAKFHVD (90 aa)) enclose the LRRCT domain. Residues 518–587 (LLTEPAKPVK…TTSQTVDYQG (70 aa)) form a B-1 repeat. Residues 518–706 (LLTEPAKPVK…ITLYAQFTKN (189 aa)) form a 3 X approximate tandem repeats, type B region. The stretch at 588–657 (LLQEPTPPTK…STTQAVDYQG (70 aa)) is one B-2 repeat. The B-3 repeat unit spans residues 658-706 (LLKEPKAPTKAGYTFKGWYDEKTDGKKWDFATDKMPANDITLYAQFTKN). The disordered stretch occupies residues 705 to 757 (KNPVAPPTTGGNTPPTTNNGGNTTPPSANIPGSDTSNTSTGNSASTTSTMNAY). Residues 711–753 (PTTGGNTPPTTNNGGNTTPPSANIPGSDTSNTSTGNSASTTST) are compositionally biased toward low complexity. The LPXTG sorting signal signature appears at 767–771 (LPTTG). The residue at position 770 (T770) is a Pentaglycyl murein peptidoglycan amidated threonine. A propeptide spans 771–800 (GDSDNALYLLLGLLAVGTAMALTKKARASK) (removed by sortase A).

This sequence belongs to the internalin family.

It localises to the secreted. The protein localises to the cell wall. Functionally, mediates the entry of Listeria monocytogenes into cells. Binds to host receptor cadherin-1 (E-cadherin, CDH1). This Listeria monocytogenes serotype 1/2a (strain 10403S) protein is Internalin A (inlA).